The primary structure comprises 320 residues: Esterase LipI (320 aa).

Active-site residues include Ser-165, Asp-261, and His-291.

It belongs to the 'GDXG' lipolytic enzyme family.

It catalyses the reaction a fatty acid ester + H2O = an aliphatic alcohol + a fatty acid + H(+). The enzyme catalyses a butanoate ester + H2O = an aliphatic alcohol + butanoate + H(+). The catalysed reaction is an octanoate ester + H2O = an aliphatic alcohol + octanoate + H(+). It carries out the reaction decanoate ester + H2O = decanoate + an aliphatic alcohol + H(+). It catalyses the reaction an acetyl ester + H2O = an aliphatic alcohol + acetate + H(+). The enzyme catalyses a dodecanoate ester + H2O = an aliphatic alcohol + dodecanoate + H(+). Inhibited by ionic detergents SDS (anions) and CTAB (cationic). Strongly inhibited by Zn(2+). Functionally, esterase that can hydrolyze short-chain esters with the carbon chain containing 2 to 12 carbon atoms. In vitro, pNP-butyrate is the preferred substrate. The chain is Esterase LipI from Mycobacterium tuberculosis (strain ATCC 25618 / H37Rv).